Consider the following 188-residue polypeptide: Elongation factor P-like protein (188 aa).

The protein belongs to the elongation factor P family.

The polypeptide is Elongation factor P-like protein (Xanthomonas euvesicatoria pv. vesicatoria (strain 85-10) (Xanthomonas campestris pv. vesicatoria)).